A 585-amino-acid chain; its full sequence is uncharacterized protein (585 aa).

The segment covering 1–18 (MSALSTKLEPTNSYSESL) has biased composition (polar residues). Positions 1–23 (MSALSTKLEPTNSYSESLPPQRR) are disordered.

This sequence belongs to the protein kinase superfamily. ADCK protein kinase family.

This is an uncharacterized protein from Synechocystis sp. (strain ATCC 27184 / PCC 6803 / Kazusa).